The sequence spans 59 residues: UPF0434 protein PMI0721 (59 aa).

The protein belongs to the UPF0434 family.

In Proteus mirabilis (strain HI4320), this protein is UPF0434 protein PMI0721.